Here is a 292-residue protein sequence, read N- to C-terminus: ATP synthase gamma chain (292 aa).

The protein belongs to the ATPase gamma chain family. F-type ATPases have 2 components, CF(1) - the catalytic core - and CF(0) - the membrane proton channel. CF(1) has five subunits: alpha(3), beta(3), gamma(1), delta(1), epsilon(1). CF(0) has three main subunits: a, b and c.

The protein localises to the cell inner membrane. Functionally, produces ATP from ADP in the presence of a proton gradient across the membrane. The gamma chain is believed to be important in regulating ATPase activity and the flow of protons through the CF(0) complex. This Rhodopseudomonas palustris (strain BisB18) protein is ATP synthase gamma chain.